Here is a 673-residue protein sequence, read N- to C-terminus: L-type lectin-domain containing receptor kinase SIT2 (673 aa).

The signal sequence occupies residues 1–27 (MVLPKPEMPFFVLLLFLGLGCLRPAAA). At 28 to 296 (TDERFVFNGF…FPKPRSKTLE (269 aa)) the chain is on the extracellular side. A legume-lectin like region spans residues 32-270 (FVFNGFTGAN…VLGWSFKMNG (239 aa)). N-linked (GlcNAc...) asparagine glycosylation is found at N41, N60, N82, N118, N138, N191, N214, N235, and N276. The chain crosses the membrane as a helical span at residues 297–317 (IVLPIASAVLVFAVAAAVFVF). The Cytoplasmic segment spans residues 318–673 (MRRRRMFSEL…GTFSDLSGGR (356 aa)). Residues 352–631 (FSDKRLLGIG…LEGDVPLPEL (280 aa)) enclose the Protein kinase domain. Residues 358–366 (LGIGGFGRV) and K381 contribute to the ATP site. D477 serves as the catalytic Proton acceptor.

It in the C-terminal section; belongs to the protein kinase superfamily. Ser/Thr protein kinase family. The protein in the N-terminal section; belongs to the leguminous lectin family. As to expression, mainly expressed in root epidermal cells.

It localises to the cell membrane. The enzyme catalyses L-seryl-[protein] + ATP = O-phospho-L-seryl-[protein] + ADP + H(+). It catalyses the reaction L-threonyl-[protein] + ATP = O-phospho-L-threonyl-[protein] + ADP + H(+). Its function is as follows. Lectin-domain containing receptor kinase involved in salt stress response. Acts as a negative regulator of salt tolerance. The sequence is that of L-type lectin-domain containing receptor kinase SIT2 from Oryza sativa subsp. japonica (Rice).